Consider the following 86-residue polypeptide: Small ribosomal subunit protein bS20 (86 aa).

Residues 1–22 (MANIKSAKKRAVQSEKRRKHNA) are compositionally biased toward basic residues. The segment at 1-28 (MANIKSAKKRAVQSEKRRKHNASGRSMM) is disordered.

Belongs to the bacterial ribosomal protein bS20 family.

Functionally, binds directly to 16S ribosomal RNA. The polypeptide is Small ribosomal subunit protein bS20 (Serratia proteamaculans (strain 568)).